We begin with the raw amino-acid sequence, 2343 residues long: Pecanex-like protein 1 (2343 aa).

A run of 2 helical transmembrane segments spans residues 33–53 (ALHL…YMAL) and 57–77 (MIIV…LKMV). 4 disordered regions span residues 98–163 (FTDQ…GSSR), 271–290 (SHSY…SSSA), 306–691 (QQQR…TRAR), and 749–826 (TRSR…QGQQ). The segment covering 143–163 (SSRNSYAGLDPSNQIGSGSSR) has biased composition (polar residues). Residues 272–282 (HSYRKEHRPRG) are compositionally biased toward basic residues. Residues 372–390 (SLRSLSTRSSGSTESYCSG) show a composition bias toward low complexity. The segment covering 396–412 (NSTLSSYKSEQTSSTHI) has biased composition (polar residues). Composition is skewed to basic and acidic residues over residues 416–457 (LSEH…DKTA), 507–521 (RPPE…EQGE), and 530–546 (KVCK…DVRP). A compositionally biased stretch (basic residues) spans 556–571 (TSAHKPGRRRTGKKRA). 3 stretches are compositionally biased toward low complexity: residues 624–637 (SDSS…SCQS), 769–780 (AATGAAQASEEA), and 809–826 (TLLI…QGQQ). 13 helical membrane-spanning segments follow: residues 978–998 (FWIL…LLAL), 1009–1029 (ILAV…LIQG), 1034–1054 (IWVF…LKSV), 1068–1088 (IIAY…WLLD), 1118–1138 (LVIV…LPQV), 1162–1182 (LLAA…LYGL), 1195–1215 (HIPV…YHLS), 1268–1288 (LVVC…TVFT), 1296–1316 (YVLY…LPQV), 1406–1426 (SFSS…FFKF), 1434–1454 (TMLL…ELLY), 1458–1478 (FVYT…HAFA), and 1493–1513 (AVVS…AIFI). The disordered stretch occupies residues 2050–2120 (EDSDTGGGTS…VQSSLVRQSP (71 aa)). Polar residues-rich tracts occupy residues 2060–2080 (CPAN…QGST) and 2094–2117 (PTTS…SLVR).

This sequence belongs to the pecanex family. Specifically expressed in the germ line and not in the somatic cells of the testis, reaching its peak at the pachytene stage of the meiotic prophase. Detected in pachytene spermatocytes and round spermatids (at protein level).

It localises to the membrane. This is Pecanex-like protein 1 from Rattus norvegicus (Rat).